The primary structure comprises 277 residues: Small ribosomal subunit protein mS23 (277 aa).

Disordered stretches follow at residues 48 to 85 and 232 to 277; these read APSH…KKPS and LAAF…GPPI. The span at 244–269 shows a compositional bias: acidic residues; it reads ESGESEDEIPLIEEEDAIGASEESET.

This sequence belongs to the mitochondrion-specific ribosomal protein mS23 family. Component of the mitochondrial small ribosomal subunit.

It localises to the mitochondrion. The chain is Small ribosomal subunit protein mS23 (RSM25) from Ajellomyces capsulatus (strain NAm1 / WU24) (Darling's disease fungus).